The sequence spans 288 residues: ATP synthase gamma chain (288 aa).

It belongs to the ATPase gamma chain family. F-type ATPases have 2 components, CF(1) - the catalytic core - and CF(0) - the membrane proton channel. CF(1) has five subunits: alpha(3), beta(3), gamma(1), delta(1), epsilon(1). CF(0) has three main subunits: a, b and c.

Its subcellular location is the cell inner membrane. Functionally, produces ATP from ADP in the presence of a proton gradient across the membrane. The gamma chain is believed to be important in regulating ATPase activity and the flow of protons through the CF(0) complex. This Blochmanniella floridana protein is ATP synthase gamma chain.